The primary structure comprises 376 residues: MAKQDYYETLGVQKGADEKEIKRAYKRLAMKYHPDRTNGDKAAEEKFKEVNEAYEILMDKEKRAAYDQYGHAAFEQGGFGGGAGGFGGGFGGFGGFEDIFSEMFGGGASRQRVVRGEDLRYDIEITLEEAVRGTTKDIKINTLAACDHCDGSGAEKGSKVETCPTCHGHGRVRRQQGFFMTETTCPTCQGSGKKIEKPCKHCHGDGRVHKKKNLSVKIPAGVDTGNQLRLSGEGAAGENGAPAGDLYVVIHVKDHHIFERDGSNLYCEVPISFTMAALGGEIEVPTLDGRVKLKIPAETQTGKLFRMRGKGVTSTRAGYAGDLICKIIVETPVKLNEEQKELLRKFEESLEGQSKQRPKSSSFLDGVKKFFDNLGK.

Residues 5–70 (DYYETLGVQK…EKRAAYDQYG (66 aa)) form the J domain. A CR-type zinc finger spans residues 133–211 (GTTKDIKINT…CHGDGRVHKK (79 aa)). Zn(2+)-binding residues include Cys146, Cys149, Cys163, Cys166, Cys185, Cys188, Cys199, and Cys202. CXXCXGXG motif repeat units lie at residues 146 to 153 (CDHCDGSG), 163 to 170 (CPTCHGHG), 185 to 192 (CPTCQGSG), and 199 to 206 (CKHCHGDG).

This sequence belongs to the DnaJ family. Homodimer. Zn(2+) is required as a cofactor.

The protein localises to the cytoplasm. In terms of biological role, participates actively in the response to hyperosmotic and heat shock by preventing the aggregation of stress-denatured proteins and by disaggregating proteins, also in an autonomous, DnaK-independent fashion. Unfolded proteins bind initially to DnaJ; upon interaction with the DnaJ-bound protein, DnaK hydrolyzes its bound ATP, resulting in the formation of a stable complex. GrpE releases ADP from DnaK; ATP binding to DnaK triggers the release of the substrate protein, thus completing the reaction cycle. Several rounds of ATP-dependent interactions between DnaJ, DnaK and GrpE are required for fully efficient folding. Also involved, together with DnaK and GrpE, in the DNA replication of plasmids through activation of initiation proteins. The chain is Chaperone protein DnaJ from Mannheimia succiniciproducens (strain KCTC 0769BP / MBEL55E).